We begin with the raw amino-acid sequence, 74 residues long: MPRYYEDKPEGGACAGVKEDLGLCLLQSDCVLKEGKSPRQCLKEGNCKALKYSFFECKRSMLDARSRFRGRKGY.

The CHCH domain maps to 27 to 65 (QSDCVLKEGKSPRQCLKEGNCKALKYSFFECKRSMLDAR). Residues 30 to 41 (CVLKEGKSPRQC) carry the Cx10C motif motif. Cystine bridges form between Cys-30–Cys-57 and Cys-41–Cys-47. Residue Ser-37 is modified to Phosphoserine. Positions 47-57 (CKALKYSFFEC) match the Cx9C motif motif.

It belongs to the PET191 family.

In terms of biological role, involved in an early step of the mitochondrial complex IV assembly process. The chain is Cytochrome c oxidase assembly factor 5 (COA5) from Bos taurus (Bovine).